The chain runs to 357 residues: DNA replication and repair protein RecF (357 aa).

31-38 (GQNGAGKT) contacts ATP.

This sequence belongs to the RecF family.

The protein resides in the cytoplasm. The RecF protein is involved in DNA metabolism; it is required for DNA replication and normal SOS inducibility. RecF binds preferentially to single-stranded, linear DNA. It also seems to bind ATP. The sequence is that of DNA replication and repair protein RecF from Coxiella burnetii (strain CbuK_Q154) (Coxiella burnetii (strain Q154)).